A 207-amino-acid polypeptide reads, in one-letter code: Ribosomal RNA small subunit methyltransferase G (207 aa).

Residues Gly-73, Leu-78, 124 to 125 (VE), and Arg-139 contribute to the S-adenosyl-L-methionine site.

This sequence belongs to the methyltransferase superfamily. RNA methyltransferase RsmG family.

The protein localises to the cytoplasm. The enzyme catalyses guanosine(527) in 16S rRNA + S-adenosyl-L-methionine = N(7)-methylguanosine(527) in 16S rRNA + S-adenosyl-L-homocysteine. Functionally, specifically methylates the N7 position of guanine in position 527 of 16S rRNA. The chain is Ribosomal RNA small subunit methyltransferase G from Salmonella arizonae (strain ATCC BAA-731 / CDC346-86 / RSK2980).